The following is a 422-amino-acid chain: Serine--tRNA ligase (422 aa).

226–228 (TSE) contacts L-serine. ATP is bound by residues 257-259 (RRE) and valine 273. Glutamate 280 lines the L-serine pocket. 344 to 347 (ELTS) is an ATP binding site. L-serine is bound at residue threonine 379.

It belongs to the class-II aminoacyl-tRNA synthetase family. Type-1 seryl-tRNA synthetase subfamily. Homodimer. The tRNA molecule binds across the dimer.

It is found in the cytoplasm. The enzyme catalyses tRNA(Ser) + L-serine + ATP = L-seryl-tRNA(Ser) + AMP + diphosphate + H(+). The catalysed reaction is tRNA(Sec) + L-serine + ATP = L-seryl-tRNA(Sec) + AMP + diphosphate + H(+). It participates in aminoacyl-tRNA biosynthesis; selenocysteinyl-tRNA(Sec) biosynthesis; L-seryl-tRNA(Sec) from L-serine and tRNA(Sec): step 1/1. In terms of biological role, catalyzes the attachment of serine to tRNA(Ser). Is also able to aminoacylate tRNA(Sec) with serine, to form the misacylated tRNA L-seryl-tRNA(Sec), which will be further converted into selenocysteinyl-tRNA(Sec). This Corynebacterium glutamicum (strain ATCC 13032 / DSM 20300 / JCM 1318 / BCRC 11384 / CCUG 27702 / LMG 3730 / NBRC 12168 / NCIMB 10025 / NRRL B-2784 / 534) protein is Serine--tRNA ligase.